A 568-amino-acid polypeptide reads, in one-letter code: MAAALLLWTAGTVCAAPIPWQSQKFEYVADRKDIKEVLRDLGASQHVMTSISTQVEGSVTGSFNETPQKFLDRMAGTFGFAWYYDGAVLRVTSANEAQSATIALTRASTAQVKRALTRMGIADSRFPIQYDDDSGSIVVSGPPRLVELVRDIAQVIDRGREDANRTVVRAFPLRYAWATDHRVTVNGQSVNIRGVASILNSMYGGDGPSDSGTAPRAQDRRLDSVAPGEASAGRAGTRALSSLGGGKSPLPPGGTGQYVGNSGPYAPPPSGENRLRSDELDDRGSTPIIRADPRSNSVLVRDRADRMAAHQSLIESLDSRPAVLEISASIIDISENALEQLGVDWRLHNSRFDLQTGNGTNTMLNNPGSLDSVATTAGAAAAIAATPAGGVLSAVIGGGSRYLMARISALQQTDQARITANPKVATLDNTEAVMDNRQNFYVPVAGYQSADLYAISAGVSLRVLPMVVMDGGTVRIRMNVHIEDGQITSQQVGNLPITSQSEIDTQALINEGDSLLIAGYSVEQQSKSVDAVPGLSKIPLVGALFRTDQTTGKRFQRMFLVTPRVITP.

The signal sequence occupies residues 1–15; that stretch reads MAAALLLWTAGTVCA. Residues 203 to 292 form a disordered region; it reads YGGDGPSDSG…RGSTPIIRAD (90 aa). Positions 243 to 257 are enriched in gly residues; sequence LGGGKSPLPPGGTGQ. Basic and acidic residues predominate over residues 273–284; that stretch reads NRLRSDELDDRG.

The protein belongs to the bacterial secretin family. T3SS SctC subfamily. The core secretion machinery of the T3SS is composed of approximately 20 different proteins, including cytoplasmic components, a base, an export apparatus and a needle. This subunit is part of the base, which anchors the injectisome in the bacterial cell envelope. Forms a stable homooligomeric complex.

The protein localises to the cell outer membrane. Functionally, component of the type III secretion system (T3SS), also called injectisome, which is used to inject bacterial effector proteins into eukaryotic host cells. Forms a ring-shaped multimeric structure with an apparent central pore in the outer membrane. The polypeptide is Type 3 secretion system secretin (Ralstonia nicotianae (strain ATCC BAA-1114 / GMI1000) (Ralstonia solanacearum)).